We begin with the raw amino-acid sequence, 389 residues long: GDSL esterase/lipase At5g14450 (389 aa).

The first 30 residues, methionine 1–serine 30, serve as a signal peptide directing secretion. Residue serine 48 is the Nucleophile of the active site. 2 N-linked (GlcNAc...) asparagine glycosylation sites follow: asparagine 125 and asparagine 335. Residues aspartate 354 and histidine 357 contribute to the active site.

It belongs to the 'GDSL' lipolytic enzyme family.

It localises to the secreted. In Arabidopsis thaliana (Mouse-ear cress), this protein is GDSL esterase/lipase At5g14450.